The following is a 1755-amino-acid chain: Transposon Ty1-ER2 Gag-Pol polyprotein (1755 aa).

3 stretches are compositionally biased toward polar residues: residues M1–P10, T48–S60, and Q127–F152. 3 disordered regions span residues M1–Q93, P126–P173, and G352–T421. Over residues T153 to T165 the composition is skewed to low complexity. The tract at residues N299–H401 is RNA-binding. Residues N402 to S418 are compositionally biased toward low complexity. D461 functions as the For protease activity; shared with dimeric partner in the catalytic mechanism. The integrase-type zinc finger-like stretch occupies residues N583–C640. Residues N660–P835 form the Integrase catalytic domain. 2 residues coordinate Mg(2+): D671 and D736. The interval A958 to N1170 is disordered. Positions S960 to T969 are enriched in low complexity. The span at S1005–T1015 shows a compositional bias: polar residues. Positions E1038–S1053 are enriched in basic and acidic residues. Polar residues-rich tracts occupy residues Y1054–E1082 and S1095–L1106. The Bipartite nuclear localization signal signature appears at K1178 to R1212. Positions N1338–Q1476 constitute a Reverse transcriptase Ty1/copia-type domain. Residues D1346, D1427, D1428, D1610, E1652, and D1685 each contribute to the Mg(2+) site. The RNase H Ty1/copia-type domain maps to D1610–K1752.

As to quaternary structure, the capsid protein forms a homotrimer, from which the VLPs are assembled. The protease is a homodimer, whose active site consists of two apposed aspartic acid residues. In terms of processing, initially, virus-like particles (VLPs) are composed of the structural unprocessed proteins Gag and Gag-Pol, and also contain the host initiator methionine tRNA (tRNA(i)-Met) which serves as a primer for minus-strand DNA synthesis, and a dimer of genomic Ty RNA. Processing of the polyproteins occurs within the particle and proceeds by an ordered pathway, called maturation. First, the protease (PR) is released by autocatalytic cleavage of the Gag-Pol polyprotein yielding capsid protein p45 and a Pol-p154 precursor protein. This cleavage is a prerequisite for subsequent processing of Pol-p154 at the remaining sites to release the mature structural and catalytic proteins. Maturation takes place prior to the RT reaction and is required to produce transposition-competent VLPs.

Its subcellular location is the cytoplasm. It is found in the nucleus. It catalyses the reaction DNA(n) + a 2'-deoxyribonucleoside 5'-triphosphate = DNA(n+1) + diphosphate. It carries out the reaction Endonucleolytic cleavage to 5'-phosphomonoester.. Capsid protein (CA) is the structural component of the virus-like particle (VLP), forming the shell that encapsulates the retrotransposons dimeric RNA genome. The particles are assembled from trimer-clustered units and there are holes in the capsid shells that allow for the diffusion of macromolecules. CA also has nucleocapsid-like chaperone activity, promoting primer tRNA(i)-Met annealing to the multipartite primer-binding site (PBS), dimerization of Ty1 RNA and initiation of reverse transcription. Its function is as follows. The aspartyl protease (PR) mediates the proteolytic cleavages of the Gag and Gag-Pol polyproteins after assembly of the VLP. In terms of biological role, reverse transcriptase/ribonuclease H (RT) is a multifunctional enzyme that catalyzes the conversion of the retro-elements RNA genome into dsDNA within the VLP. The enzyme displays a DNA polymerase activity that can copy either DNA or RNA templates, and a ribonuclease H (RNase H) activity that cleaves the RNA strand of RNA-DNA heteroduplexes during plus-strand synthesis and hydrolyzes RNA primers. The conversion leads to a linear dsDNA copy of the retrotransposon that includes long terminal repeats (LTRs) at both ends. Functionally, integrase (IN) targets the VLP to the nucleus, where a subparticle preintegration complex (PIC) containing at least integrase and the newly synthesized dsDNA copy of the retrotransposon must transit the nuclear membrane. Once in the nucleus, integrase performs the integration of the dsDNA into the host genome. The protein is Transposon Ty1-ER2 Gag-Pol polyprotein (TY1B-ER2) of Saccharomyces cerevisiae (strain ATCC 204508 / S288c) (Baker's yeast).